The primary structure comprises 529 residues: 3-ketoacyl-CoA synthase 20 (529 aa).

Positions 1-22 (MSHNQNQPHRPVPVHVTNAEPN) are disordered. A run of 2 helical transmembrane segments spans residues 52 to 72 (LYIL…SFTI) and 84 to 104 (FHFL…TAYF). The FAE domain maps to 103 to 396 (YFTTRPRRVF…FFATLVARKV (294 aa)). Residues C247, H326, H415, H419, and N452 contribute to the active site.

Belongs to the thiolase-like superfamily. Chalcone/stilbene synthases family. In terms of tissue distribution, expressed in aerial organs. Expressed in leaves, flowers, siliques and stems. Expressed in roots, young seedlings, leaves, flowers and siliques.

It localises to the membrane. It carries out the reaction a very-long-chain acyl-CoA + malonyl-CoA + H(+) = a very-long-chain 3-oxoacyl-CoA + CO2 + CoA. Its pathway is lipid metabolism; fatty acid biosynthesis. With respect to regulation, inhibited by K3 herbicides such as alachlor, allidochlor, anilofos, cafenstrole, fentrazamide and flufenacet. Strongly inhibited by metazachlor and only slightly by mefluidide. In terms of biological role, mediates the synthesis of VLCFAs from 22 to 26 carbons in length (e.g. C22, C24, C26). Functionally redundant with KCS2 in the two-carbon elongation of C22 fatty acids that is required for cuticular wax and root suberin biosynthesis. The protein is 3-ketoacyl-CoA synthase 20 of Arabidopsis thaliana (Mouse-ear cress).